We begin with the raw amino-acid sequence, 122 residues long: Putative 2'-deoxynucleoside 5'-phosphate N-hydrolase 1 (122 aa).

Residues 4–10, Tyr-19, His-37, Glu-83, and 105–107 contribute to the substrate site; these read FLSGSIR and SAM.

Belongs to the 2'-deoxynucleoside 5'-phosphate N-hydrolase 1 family. Monomer and homodimer.

It catalyses the reaction a pyrimidine 2'-deoxyribonucleoside 5'-phosphate + H2O = a pyrimidine nucleobase + 2-deoxy-D-ribose 5-phosphate. It carries out the reaction a purine 2'-deoxyribonucleoside 5'-phosphate + H2O = a purine nucleobase + 2-deoxy-D-ribose 5-phosphate. Functionally, catalyzes the cleavage of the N-glycosidic bond of deoxyribonucleoside 5'-monophosphates to yield deoxyribose 5-phosphate and a purine or pyrimidine base. This chain is Putative 2'-deoxynucleoside 5'-phosphate N-hydrolase 1, found in Methanococcoides burtonii (strain DSM 6242 / NBRC 107633 / OCM 468 / ACE-M).